The chain runs to 476 residues: MALKDTGSGGSTILPISEMVSASSSPGAPLAAAPGPCAPSPFPEVVELNVGGQVYVTKHSTLLSVPDSTLASMFSPSSPRGGARRRGDLPRDSRARFFIDRDGFLFRYVLDYLRDKQLALPEHFPEKERLLREAEFFQLTDLVKLLSPKVTKQNSLNDECCQSDLEDNVSQGSSDALLLRGAAAGAPSGSGAHGVSGVVGGGSAPDKRSGFLTLGYRGSYTTVRDNQADAKFRRVARIMVCGRIALAKEVFGDTLNESRDPDRQPEKYTSRFYLKFTYLEQAFDRLSEAGFHMVACNSSGTAAFVNQYRDDKIWSSYTEYIFFRPPQKIVSPKQEHEDRKRDKVTDKGSESGTSCNELSTSSCDSHSEASTPQDNPANTQQAAAHQPNTLTLDRPSRKAPVQWMPPPDKRRNSELFQSLISKSRETNLSKKKVCEKLSVEEEMKKCIQDFKKIHIPDCFPERKRQWQSELLQKYGL.

A BTB domain is found at 44 to 122; the sequence is EVVELNVGGQ…LRDKQLALPE (79 aa). Phosphoserine is present on Ser78. Arg80 carries the post-translational modification Omega-N-methylarginine. The segment at 331 to 412 is disordered; the sequence is SPKQEHEDRK…WMPPPDKRRN (82 aa). The span at 333–349 shows a compositional bias: basic and acidic residues; that stretch reads KQEHEDRKRDKVTDKGS. Residues 350-391 show a composition bias toward polar residues; that stretch reads ESGTSCNELSTSSCDSHSEASTPQDNPANTQQAAAHQPNTLT. Residue Ser413 is modified to Phosphoserine.

Interacts as a tetramer with GABBR1 and GABBR2.

It localises to the presynaptic cell membrane. It is found in the postsynaptic cell membrane. Functionally, auxiliary subunit of GABA-B receptors that determine the pharmacology and kinetics of the receptor response. Increases agonist potency and markedly alter the G-protein signaling of the receptors by accelerating onset and promoting desensitization. The sequence is that of BTB/POZ domain-containing protein KCTD8 (Kctd8) from Mus musculus (Mouse).